The following is a 653-amino-acid chain: Epithelial sodium channel subunit gamma (653 aa).

The Cytoplasmic portion of the chain corresponds to 1-54; sequence MGHGRRISESIKKQLPVTGPEAPTVKNLMDWYLNNTNTHGCRRIAVSRGYLRRW. Residues 55–75 form a helical membrane-spanning segment; it reads IWICFTVSSVGMIFWQWTLLL. The Extracellular portion of the chain corresponds to 76 to 546; the sequence is MSYYTVSVSV…GGQLGLWMSC (471 aa). 8 disulfide bridges follow: C100/C290, C214/C221, C267/C274, C379/C464, C401/C460, C405/C456, C414/C441, and C416/C430. The chain crosses the membrane as a helical span at residues 547–567; sequence SIVCFLEMWEVFLVDILTIIA. Over 568 to 653 the chain is Cytoplasmic; sequence RYWLHRGRQW…DEQVSDTEVN (86 aa). A disordered region spans residues 582-608; sequence KERQMQQPSPPDHDTGHHNPVCIDDED.

It belongs to the amiloride-sensitive sodium channel (TC 1.A.6) family. SCNN1G subfamily. As to quaternary structure, component of the heterotrimeric epithelial sodium channel (ENaC) composed of an alpha/SCNN1A, a beta/SCNN1B and a gamma/SCNN1G subunit. As to expression, strongly expressed in gill, liver, kidney and rectum and more weakly in heart, muscle and intestine.

The protein localises to the apical cell membrane. The catalysed reaction is Na(+)(in) = Na(+)(out). Its activity is regulated as follows. Originally identified and characterized by its inhibition by the diuretic drug amiloride. Functionally, this is one of the three pore-forming subunits of the heterotrimeric epithelial sodium channel (ENaC), a critical regulator of sodium balance and fluid homeostasis. ENaC operates in epithelial tissues, where it mediates the electrodiffusion of sodium ions from extracellular fluid through the apical membrane of cells, with water following osmotically. The protein is Epithelial sodium channel subunit gamma of Neoceratodus forsteri (Australian lungfish).